Here is a 327-residue protein sequence, read N- to C-terminus: Interleukin-12 subunit beta (327 aa).

Residues 1-22 form the signal peptide; that stretch reads MHPQQLVVSWFSLVLLASPIVA. The region spanning 23–106 is the Ig-like C2-type domain; it reads IWELEKNVYI…LSRSLLLLHK (84 aa). Residues C50 and C90 are joined by a disulfide bond. The N-linked (GlcNAc...) asparagine glycan is linked to N223. Residues 238-327 form the Fibronectin type-III domain; it reads PPKNLQLKPL…WSEWASVSCS (90 aa).

It belongs to the IL-12B family. As to quaternary structure, heterodimer with IL12A; disulfide-linked. The heterodimer is known as interleukin IL-12. Heterodimer with IL23A; disulfide-linked. The heterodimer is known as interleukin IL-23. Also secreted as a monomer. Interacts with NBR1; this interaction promotes IL-12 secretion.

Functionally, cytokine that can act as a growth factor for activated T and NK cells, enhance the lytic activity of NK/lymphokine-activated killer cells, and stimulate the production of IFN-gamma by resting PBMC. Its function is as follows. Associates with IL23A to form the IL-23 interleukin, a heterodimeric cytokine which functions in innate and adaptive immunity. IL-23 may constitute with IL-17 an acute response to infection in peripheral tissues. IL-23 binds to a heterodimeric receptor complex composed of IL12RB1 and IL23R, activates the Jak-Stat signaling cascade, stimulates memory rather than naive T-cells and promotes production of pro-inflammatory cytokines. IL-23 induces autoimmune inflammation and thus may be responsible for autoimmune inflammatory diseases and may be important for tumorigenesis. The polypeptide is Interleukin-12 subunit beta (IL12B) (Bubalus bubalis (Domestic water buffalo)).